The primary structure comprises 172 residues: 3-hydroxydecanoyl-[acyl-carrier-protein] dehydratase (172 aa).

Residue His71 is part of the active site.

Belongs to the thioester dehydratase family. FabA subfamily. Homodimer.

It localises to the cytoplasm. It catalyses the reaction a (3R)-hydroxyacyl-[ACP] = a (2E)-enoyl-[ACP] + H2O. The catalysed reaction is (3R)-hydroxydecanoyl-[ACP] = (2E)-decenoyl-[ACP] + H2O. The enzyme catalyses (2E)-decenoyl-[ACP] = (3Z)-decenoyl-[ACP]. The protein operates within lipid metabolism; fatty acid biosynthesis. In terms of biological role, necessary for the introduction of cis unsaturation into fatty acids. Catalyzes the dehydration of (3R)-3-hydroxydecanoyl-ACP to E-(2)-decenoyl-ACP and then its isomerization to Z-(3)-decenoyl-ACP. Can catalyze the dehydratase reaction for beta-hydroxyacyl-ACPs with saturated chain lengths up to 16:0, being most active on intermediate chain length. The polypeptide is 3-hydroxydecanoyl-[acyl-carrier-protein] dehydratase (Klebsiella pneumoniae (strain 342)).